The following is a 551-amino-acid chain: Steroid transmembrane transporter SLC22A24 (551 aa).

Helical transmembrane passes span 16–36 (FQIL…PHTV), 146–166 (SVAK…GGHL), 174–194 (FIVT…AFAP), 204–222 (FLTG…LLIL), 235–255 (ALIF…AFGI), 260–280 (HLQL…RWLS), 350–370 (ICLL…LLIN), 378–398 (VFLL…LGNF), 410–430 (IIFM…TQEM), 435–455 (LVLA…TAVL), 469–489 (LGVI…LMIL), and 496–516 (LPWI…LLLP). Positions 524 to 551 (PDSIQDVENKRKSSREVKKDAVAKVTPF) are disordered. Positions 530-545 (VENKRKSSREVKKDAV) are enriched in basic and acidic residues.

In terms of tissue distribution, localized to the kidney. Mainly expressed in the late segments of proximal tubules.

It localises to the cell membrane. It catalyses the reaction estrone 3-sulfate(out) + glutarate(in) = estrone 3-sulfate(in) + glutarate(out). The catalysed reaction is 17beta-estradiol 17-O-(beta-D-glucuronate)(out) + glutarate(in) = 17beta-estradiol 17-O-(beta-D-glucuronate)(in) + glutarate(out). The enzyme catalyses dehydroepiandrosterone 3-sulfate(out) + glutarate(in) = dehydroepiandrosterone 3-sulfate(in) + glutarate(out). Renal transmembrane organic anion/dicarboxylate exchanger that participates in the reabsorption of conjugated steroids, as well as bile acids, driven by an outward gradient of dicarboxylates such as glutarate or succinate. Transports estrone 3-sulfate and estradiol-17-glucuronide (17beta-estradiol 17-O-(beta-D-glucuronate)), but not androstanediol glucuronide (5alpha-androstane-3alpha,17beta-diol 3-O-(beta-D-glucuronate)), nor taurocholate. Prefers sulfate conjugates of steroids rather than glucuronide conjugates. The chain is Steroid transmembrane transporter SLC22A24 from Rattus norvegicus (Rat).